Reading from the N-terminus, the 181-residue chain is Ferritin heavy chain (181 aa).

At M1 the chain carries N-acetylmethionine. The residue at position 2 (T2) is an N-acetylthreonine; in Ferritin heavy chain, N-terminally processed. A Ferritin-like diiron domain is found at 11 to 160 (QNYHQDSEAA…DHITNLHRMG (150 aa)). S179 carries the post-translational modification Phosphoserine.

This sequence belongs to the ferritin family. As to quaternary structure, oligomer of 24 subunits. There are two types of subunits: L (light) chain and H (heavy) chain. The major chain can be light or heavy, depending on the species and tissue type. The functional molecule forms a roughly spherical shell with a diameter of 12 nm and contains a central cavity into which the insoluble mineral iron core is deposited. Interacts with NCOA4; NCOA4 promotes targeting of the iron-binding ferritin complex to autolysosomes following starvation or iron depletion. In terms of assembly, (Microbial infection) Interacts with classical swine fever virus protein NS4B. (Microbial infection) Interacts with Porcine circovirus 2 ORF4 protein.

Its subcellular location is the cytoplasm. The protein localises to the lysosome. It localises to the cytoplasmic vesicle. It is found in the autophagosome. The enzyme catalyses 4 Fe(2+) + O2 + 4 H(+) = 4 Fe(3+) + 2 H2O. Its function is as follows. Stores iron in a soluble, non-toxic, readily available form. Important for iron homeostasis. Has ferroxidase activity. Iron is taken up in the ferrous form and deposited as ferric hydroxides after oxidation. Also plays a role in delivery of iron to cells. Mediates iron uptake in capsule cells of the developing kidney. Delivery to lysosomes is mediated by the cargo receptor NCOA4 for autophagic degradation and release of iron. (Microbial infection) Is unable to assume its function upon interaction with viral proteins, thereby increasing Fe concentration in the cytoplasm. This would inhibit the accumulation of reactive oxygen in host cells, leading to reduced apoptosis and increasing the survival of virus infected cell. This is Ferritin heavy chain (FTH1) from Sus scrofa (Pig).